Here is a 373-residue protein sequence, read N- to C-terminus: Secondary metabolism regulator laeA (373 aa).

Disordered regions lie at residues 1 to 21 (MFLNGQGGQRPPTVASPPLNV) and 53 to 81 (AAERDPAAGRWHANGSPSINSTSSKNPDR). Polar residues predominate over residues 67-77 (GSPSINSTSSK).

It belongs to the methyltransferase superfamily. LaeA methyltransferase family. In terms of assembly, component of the heterotrimeric velvet complex composed of laeA, veA and velB; VeA acting as a bridging protein between laeA and velB.

The protein resides in the nucleus. The enzyme catalyses L-methionyl-[protein] + S-adenosyl-L-methionine = S-methyl-L-methionyl-[protein] + S-adenosyl-L-homocysteine. Its function is as follows. Methyltransferase that performs automethylation. No other methyl-accepting substrate has been identified yet. Component of the velvet transcription factor complex that acts as a global regulator for secondary metabolite gene expression. Controls the expression of the cyclopiazonic acid (CPA) gene clusters. Regulates also pigmentation and conidial head morphology. The chain is Secondary metabolism regulator laeA from Aspergillus fumisynnematus.